Here is a 201-residue protein sequence, read N- to C-terminus: IMP cyclohydrolase (201 aa).

This sequence belongs to the archaeal IMP cyclohydrolase family.

It carries out the reaction IMP + H2O = 5-formamido-1-(5-phospho-D-ribosyl)imidazole-4-carboxamide. It functions in the pathway purine metabolism; IMP biosynthesis via de novo pathway; IMP from 5-formamido-1-(5-phospho-D-ribosyl)imidazole-4-carboxamide: step 1/1. Its function is as follows. Catalyzes the cyclization of 5-formylamidoimidazole-4-carboxamide ribonucleotide to IMP. The protein is IMP cyclohydrolase of Methanococcus maripaludis (strain C5 / ATCC BAA-1333).